The chain runs to 393 residues: S-adenosylmethionine synthase (393 aa).

H16 provides a ligand contact to ATP. Mg(2+) is bound at residue D18. K(+) is bound at residue E44. 2 residues coordinate L-methionine: E57 and Q100. The segment at 100–110 is flexible loop; that stretch reads QSPDIVMGVDG. Residues 165 to 167, 231 to 232, D240, 246 to 247, and K267 each bind ATP; these read DAK, RF, and RK. D240 contacts L-methionine. An L-methionine-binding site is contributed by K271.

The protein belongs to the AdoMet synthase family. Homotetramer; dimer of dimers. It depends on Mg(2+) as a cofactor. K(+) serves as cofactor.

It localises to the cytoplasm. It carries out the reaction L-methionine + ATP + H2O = S-adenosyl-L-methionine + phosphate + diphosphate. The protein operates within amino-acid biosynthesis; S-adenosyl-L-methionine biosynthesis; S-adenosyl-L-methionine from L-methionine: step 1/1. Its function is as follows. Catalyzes the formation of S-adenosylmethionine (AdoMet) from methionine and ATP. The overall synthetic reaction is composed of two sequential steps, AdoMet formation and the subsequent tripolyphosphate hydrolysis which occurs prior to release of AdoMet from the enzyme. This Coxiella burnetii (strain Dugway 5J108-111) protein is S-adenosylmethionine synthase.